Here is a 347-residue protein sequence, read N- to C-terminus: Lipoyl synthase (347 aa).

Residues C77, C82, C88, C103, C107, C110, and S317 each coordinate [4Fe-4S] cluster. The region spanning 89 to 306 is the Radical SAM core domain; that stretch reads FADGTATFMI…MDYGKKIGFF (218 aa).

The protein belongs to the radical SAM superfamily. Lipoyl synthase family. It depends on [4Fe-4S] cluster as a cofactor.

It localises to the cytoplasm. It carries out the reaction [[Fe-S] cluster scaffold protein carrying a second [4Fe-4S](2+) cluster] + N(6)-octanoyl-L-lysyl-[protein] + 2 oxidized [2Fe-2S]-[ferredoxin] + 2 S-adenosyl-L-methionine + 4 H(+) = [[Fe-S] cluster scaffold protein] + N(6)-[(R)-dihydrolipoyl]-L-lysyl-[protein] + 4 Fe(3+) + 2 hydrogen sulfide + 2 5'-deoxyadenosine + 2 L-methionine + 2 reduced [2Fe-2S]-[ferredoxin]. The protein operates within protein modification; protein lipoylation via endogenous pathway; protein N(6)-(lipoyl)lysine from octanoyl-[acyl-carrier-protein]: step 2/2. Catalyzes the radical-mediated insertion of two sulfur atoms into the C-6 and C-8 positions of the octanoyl moiety bound to the lipoyl domains of lipoate-dependent enzymes, thereby converting the octanoylated domains into lipoylated derivatives. In Psychrobacter cryohalolentis (strain ATCC BAA-1226 / DSM 17306 / VKM B-2378 / K5), this protein is Lipoyl synthase.